The following is a 115-amino-acid chain: Large ribosomal subunit protein P2 (115 aa).

Methionine 1 bears the N-acetylmethionine mark. 2 positions are modified to phosphoserine: serine 17 and serine 19. Lysine 21 carries the N6-acetyllysine; alternate modification. Residue lysine 21 is modified to N6-succinyllysine; alternate. Residues 78-90 (GSAAPAAGSAPAA) show a composition bias toward low complexity. Residues 78–115 (GSAAPAAGSAPAAAEEKKDEKKEESEESDDDMGFGLFD) form a disordered region. 2 positions are modified to phosphoserine: serine 79 and serine 86. Residues 91–101 (AEEKKDEKKEE) show a composition bias toward basic and acidic residues. A phosphoserine mark is found at serine 102 and serine 105.

Belongs to the eukaryotic ribosomal protein P1/P2 family. Heterodimer with P1 at the lateral ribosomal stalk of the large ribosomal subunit.

Functionally, plays an important role in the elongation step of protein synthesis. The polypeptide is Large ribosomal subunit protein P2 (RPLP2) (Homo sapiens (Human)).